Here is a 391-residue protein sequence, read N- to C-terminus: Na(+)/H(+) antiporter NhaA 1 (391 aa).

Transmembrane regions (helical) follow at residues 19–39, 56–76, 98–118, 128–148, 157–177, 180–200, 208–228, 264–284, 297–317, 335–355, and 364–384; these read FLASESAGGIVLMAAALAALI, VWLGLSVELWINDGLMAIFFL, ALPGFAAAGGMLVPALIYIAI, GWAIPAATDIAFALGVLSLLG, VFLAALAILDDLGAVTIIAFF, SGLNLPMLAAAFATLAVLIAL, LLPYLLLGALLWFFVLQSGVH, VAFAVVPIFGFANAGVSLSGI, VALGLFVGKQIGVFLAAVLAI, GVAILCGIGFTMSLFIGNLAF, and EVKVGVLIGSGLAAIAGILLL.

The protein belongs to the NhaA Na(+)/H(+) (TC 2.A.33) antiporter family.

It is found in the cell inner membrane. The enzyme catalyses Na(+)(in) + 2 H(+)(out) = Na(+)(out) + 2 H(+)(in). Its function is as follows. Na(+)/H(+) antiporter that extrudes sodium in exchange for external protons. The sequence is that of Na(+)/H(+) antiporter NhaA 1 from Pseudomonas savastanoi pv. phaseolicola (strain 1448A / Race 6) (Pseudomonas syringae pv. phaseolicola (strain 1448A / Race 6)).